Reading from the N-terminus, the 510-residue chain is Myosin-binding protein C, cardiac-type (510 aa).

Ig-like C2-type domains follow at residues 177-269, 270-347, and 378-438; these read KKST…VKEP, PYSS…TVKT, and RDQA…SFIP.

The protein belongs to the immunoglobulin superfamily. MyBP family. As to expression, heart.

Thick filament-associated protein located in the crossbridge region of vertebrate striated muscle a bands. In vitro it binds MHC, F-actin and native thin filaments, and modifies the activity of actin-activated myosin ATPase. It may modulate muscle contraction or may play a more structural role. The sequence is that of Myosin-binding protein C, cardiac-type from Ambystoma mexicanum (Axolotl).